Here is a 322-residue protein sequence, read N- to C-terminus: Replication factor C small subunit (322 aa).

Position 46-53 (46-53 (GSAGVGKT)) interacts with ATP.

It belongs to the activator 1 small subunits family. RfcS subfamily. As to quaternary structure, heteromultimer composed of small subunits (RfcS) and large subunits (RfcL).

Its function is as follows. Part of the RFC clamp loader complex which loads the PCNA sliding clamp onto DNA. This is Replication factor C small subunit from Methanoregula boonei (strain DSM 21154 / JCM 14090 / 6A8).